Here is a 137-residue protein sequence, read N- to C-terminus: Small ribosomal subunit protein uS12 (137 aa).

Positions Met-1–Lys-43 are disordered.

This sequence belongs to the universal ribosomal protein uS12 family. As to quaternary structure, part of the 30S ribosomal subunit. Contacts proteins S8 and S17. May interact with IF1 in the 30S initiation complex.

In terms of biological role, with S4 and S5 plays an important role in translational accuracy. Interacts with and stabilizes bases of the 16S rRNA that are involved in tRNA selection in the A site and with the mRNA backbone. Located at the interface of the 30S and 50S subunits, it traverses the body of the 30S subunit contacting proteins on the other side and probably holding the rRNA structure together. The combined cluster of proteins S8, S12 and S17 appears to hold together the shoulder and platform of the 30S subunit. This Oceanobacillus iheyensis (strain DSM 14371 / CIP 107618 / JCM 11309 / KCTC 3954 / HTE831) protein is Small ribosomal subunit protein uS12.